Consider the following 432-residue polypeptide: 3-phosphoshikimate 1-carboxyvinyltransferase (432 aa).

3-phosphoshikimate-binding residues include lysine 25, serine 26, and arginine 30. Lysine 25 lines the phosphoenolpyruvate pocket. Phosphoenolpyruvate-binding residues include glycine 97 and arginine 125. Residues serine 170, glutamine 172, aspartate 318, and lysine 345 each coordinate 3-phosphoshikimate. Residue glutamine 172 coordinates phosphoenolpyruvate. Catalysis depends on aspartate 318, which acts as the Proton acceptor. Phosphoenolpyruvate contacts are provided by arginine 349 and arginine 393.

The protein belongs to the EPSP synthase family. Monomer.

The protein resides in the cytoplasm. The enzyme catalyses 3-phosphoshikimate + phosphoenolpyruvate = 5-O-(1-carboxyvinyl)-3-phosphoshikimate + phosphate. It functions in the pathway metabolic intermediate biosynthesis; chorismate biosynthesis; chorismate from D-erythrose 4-phosphate and phosphoenolpyruvate: step 6/7. In terms of biological role, catalyzes the transfer of the enolpyruvyl moiety of phosphoenolpyruvate (PEP) to the 5-hydroxyl of shikimate-3-phosphate (S3P) to produce enolpyruvyl shikimate-3-phosphate and inorganic phosphate. This chain is 3-phosphoshikimate 1-carboxyvinyltransferase, found in Geobacillus thermodenitrificans (strain NG80-2).